A 921-amino-acid chain; its full sequence is Alanine--tRNA ligase (921 aa).

The Zn(2+) site is built by His-602, His-606, Cys-706, and His-710.

This sequence belongs to the class-II aminoacyl-tRNA synthetase family. Zn(2+) serves as cofactor.

It localises to the cytoplasm. The catalysed reaction is tRNA(Ala) + L-alanine + ATP = L-alanyl-tRNA(Ala) + AMP + diphosphate. Its function is as follows. Catalyzes the attachment of alanine to tRNA(Ala) in a two-step reaction: alanine is first activated by ATP to form Ala-AMP and then transferred to the acceptor end of tRNA(Ala). Also edits incorrectly charged Ser-tRNA(Ala) and Gly-tRNA(Ala) via its editing domain. In Hyperthermus butylicus (strain DSM 5456 / JCM 9403 / PLM1-5), this protein is Alanine--tRNA ligase.